The following is a 201-amino-acid chain: Recombination protein RecR (201 aa).

The C4-type zinc-finger motif lies at 57 to 72 (CADCRTFTEQEVCNIC). The region spanning 81-176 (GQICVVESPA…DASRIAHGVP (96 aa)) is the Toprim domain.

It belongs to the RecR family.

Functionally, may play a role in DNA repair. It seems to be involved in an RecBC-independent recombinational process of DNA repair. It may act with RecF and RecO. This chain is Recombination protein RecR, found in Klebsiella pneumoniae subsp. pneumoniae (strain ATCC 700721 / MGH 78578).